A 718-amino-acid polypeptide reads, in one-letter code: Pentatricopeptide repeat-containing protein At1g22960, mitochondrial (718 aa).

Residues 1 to 11 (MILCLRLCLRA) constitute a mitochondrion transit peptide. PPR repeat units lie at residues 167–201 (ALKL…GFLP), 202–236 (SVRN…GIMP), 237–271 (TVIT…NIEF), 272–306 (SEVT…GFAV), 307–341 (TPYS…GIYP), 342–372 (TTST…MAAP), 373–407 (DVVS…DIHP), 408–442 (SIVT…LIFP), 443–477 (DVIT…GIKP), 478–512 (DGYA…DHHA), 514–548 (DLTI…GLVP), 549–583 (DHVT…RLYP), 584–618 (SVIT…GVRP), 619–653 (NVMT…GIPP), and 654–688 (NKYS…EIEP).

The protein belongs to the PPR family. P subfamily.

Its subcellular location is the mitochondrion. This Arabidopsis thaliana (Mouse-ear cress) protein is Pentatricopeptide repeat-containing protein At1g22960, mitochondrial.